The sequence spans 64 residues: Large ribosomal subunit protein uL1 (64 aa).

It belongs to the universal ribosomal protein uL1 family. Part of the 50S ribosomal subunit.

Binds directly to 23S rRNA. The L1 stalk is quite mobile in the ribosome, and is involved in E site tRNA release. Functionally, protein L1 is also a translational repressor protein, it controls the translation of the L11 operon by binding to its mRNA. The protein is Large ribosomal subunit protein uL1 (rplA) of Streptomyces lavendulae.